Here is a 256-residue protein sequence, read N- to C-terminus: MALAKRIIPCLDVDNGRVVKGVKFENIRDAGDPVEIARRYNEQGADEITFLDITASVDGRDTTLHTVERMASQVFIPLTVGGGVRTVQDIRNLLNAGADKVSINTAAVFNPEFVGEAADRFGSQCIVVAIDAKKVSGPGETPRWEIFTHGGRKPTGLDAVEWAKKMEGLGAGEILLTSMDQDGMKNGFDLGVTRAISDALGIPVIASGGVGNLQHLADGILEGHASAVLAASIFHFGEYTVPEAKAYMASRGIVVR.

Residues aspartate 12 and aspartate 131 contribute to the active site.

The protein belongs to the HisA/HisF family. As to quaternary structure, heterodimer of HisH and HisF.

It localises to the cytoplasm. It catalyses the reaction 5-[(5-phospho-1-deoxy-D-ribulos-1-ylimino)methylamino]-1-(5-phospho-beta-D-ribosyl)imidazole-4-carboxamide + L-glutamine = D-erythro-1-(imidazol-4-yl)glycerol 3-phosphate + 5-amino-1-(5-phospho-beta-D-ribosyl)imidazole-4-carboxamide + L-glutamate + H(+). The protein operates within amino-acid biosynthesis; L-histidine biosynthesis; L-histidine from 5-phospho-alpha-D-ribose 1-diphosphate: step 5/9. In terms of biological role, IGPS catalyzes the conversion of PRFAR and glutamine to IGP, AICAR and glutamate. The HisF subunit catalyzes the cyclization activity that produces IGP and AICAR from PRFAR using the ammonia provided by the HisH subunit. The sequence is that of Imidazole glycerol phosphate synthase subunit HisF from Pseudomonas putida (strain GB-1).